Consider the following 145-residue polypeptide: Actin-related protein 4A (145 aa).

Residues 47-66 (IDDAANTTEDAKESDKEKGK) form a disordered region. Residues 55–64 (EDAKESDKEK) are compositionally biased toward basic and acidic residues.

This sequence belongs to the actin family. ARP4 subfamily. In terms of tissue distribution, expressed in roots, leaves and flowers.

The sequence is that of Actin-related protein 4A (ARP4A) from Arabidopsis thaliana (Mouse-ear cress).